The chain runs to 121 residues: Large ribosomal subunit protein bL12 (121 aa).

Belongs to the bacterial ribosomal protein bL12 family. In terms of assembly, homodimer. Part of the ribosomal stalk of the 50S ribosomal subunit. Forms a multimeric L10(L12)X complex, where L10 forms an elongated spine to which 2 to 4 L12 dimers bind in a sequential fashion. Binds GTP-bound translation factors.

In terms of biological role, forms part of the ribosomal stalk which helps the ribosome interact with GTP-bound translation factors. Is thus essential for accurate translation. The sequence is that of Large ribosomal subunit protein bL12 from Clostridioides difficile (strain 630) (Peptoclostridium difficile).